Reading from the N-terminus, the 335-residue chain is MSTEGGFGGTSSSDAQQSLQSFWPRVMEEIRNLTVKDFRVQELPLARIKKIMKLDEDVKMISAEAPVLFAKAAQIFITELTLRAWIHTEDNKRRTLQRNDIAMAITKFDQFDFLIDIVPRDELKPPKRQEDVRQSVTPAEPVQYYFTLAQQPAAVQVQGQQQGQQTTSSTTTIQPGQIIIAQPQQGQTTPVTMQVGEGQQVQIVQAQPQGQAQQAQSGTGQTMQVMQQIITNTGEIQQIPVQLNAGQLQYIRLAQPVSGTQVVQGQIQTLATNAQQITQTEVQQGQQQFSQFTDGQQLYQIQQVTMPAGQDLAQPMFIQSANQPSDGQAPQVTGD.

The protein belongs to the NFYC/HAP5 subunit family. Heterotrimeric transcription factor composed of three components, NF-YA, NF-YB and NF-YC. NF-YB and NF-YC must interact and dimerize for NF-YA association and DNA binding.

It is found in the nucleus. In terms of biological role, component of the sequence-specific heterotrimeric transcription factor (NF-Y) which specifically recognizes a 5'-CCAAT-3' box motif found in the promoters of its target genes. NF-Y can function as both an activator and a repressor, depending on its interacting cofactors. In Pongo abelii (Sumatran orangutan), this protein is Nuclear transcription factor Y subunit gamma (NFYC).